We begin with the raw amino-acid sequence, 301 residues long: DNA repair protein RecO (301 aa).

Residues P272–L301 are disordered.

The protein belongs to the RecO family.

Involved in DNA repair and RecF pathway recombination. The sequence is that of DNA repair protein RecO from Synechococcus sp. (strain JA-3-3Ab) (Cyanobacteria bacterium Yellowstone A-Prime).